The sequence spans 1345 residues: DNA-directed RNA polymerase subunit beta' (1345 aa).

Residues C60, C62, C75, and C78 each contribute to the Zn(2+) site. Mg(2+) is bound by residues D536, D538, and D540. Zn(2+) contacts are provided by C895, C974, C981, and C984. The disordered stretch occupies residues 1325-1345 (DDNDNPVDFGDEFRIDPDELK). Residues 1335–1345 (DEFRIDPDELK) show a composition bias toward basic and acidic residues.

Belongs to the RNA polymerase beta' chain family. The RNAP catalytic core consists of 2 alpha, 1 beta, 1 beta' and 1 omega subunit. When a sigma factor is associated with the core the holoenzyme is formed, which can initiate transcription. Requires Mg(2+) as cofactor. The cofactor is Zn(2+).

It catalyses the reaction RNA(n) + a ribonucleoside 5'-triphosphate = RNA(n+1) + diphosphate. Functionally, DNA-dependent RNA polymerase catalyzes the transcription of DNA into RNA using the four ribonucleoside triphosphates as substrates. In Bifidobacterium animalis subsp. lactis (strain AD011), this protein is DNA-directed RNA polymerase subunit beta'.